The chain runs to 344 residues: Serine/arginine-rich splicing factor 6 (344 aa).

An RRM 1 domain is found at methionine 1–glycine 72. A phosphoserine mark is found at serine 45, serine 81, and serine 84. The tract at residues arginine 75–glycine 103 is disordered. The RRM 2 domain occupies tyrosine 110–proline 183. Lysine 165 carries the N6-acetyllysine modification. Residues isoleucine 176 to aspartate 344 form a disordered region. Lysine 182 is covalently cross-linked (Glycyl lysine isopeptide (Lys-Gly) (interchain with G-Cter in SUMO2)). A compositionally biased stretch (basic residues) spans threonine 185–lysine 250. Basic and acidic residues-rich tracts occupy residues arginine 264–arginine 273 and serine 280–serine 291. A phosphoserine mark is found at serine 297 and serine 299. Serine 303 is modified (phosphoserine; by DYRK1A). Phosphoserine occurs at positions 314 and 316. The segment covering alanine 322–aspartate 344 has biased composition (basic residues).

The protein belongs to the splicing factor SR family. Binds SREK1/SFRS12. Interacts with DYRK1A. In terms of processing, extensively phosphorylated on serine residues in the RS domain. Phosphorylated by DYRK1A, probably in the RS domain. Phosphorylation by DYRK1A modulates alternative splice site selection and inhibits the expression of MAPT/Tau exon 10.

It localises to the nucleus. Its subcellular location is the nucleus speckle. In terms of biological role, plays a role in constitutive splicing and modulates the selection of alternative splice sites. Plays a role in the alternative splicing of MAPT/Tau exon 10. Binds to alternative exons of TNC pre-mRNA and promotes the expression of alternatively spliced TNC. Plays a role in wound healing and in the regulation of keratinocyte differentiation and proliferation via its role in alternative splicing. The protein is Serine/arginine-rich splicing factor 6 (SRSF6) of Homo sapiens (Human).